The chain runs to 258 residues: 5-oxoprolinase subunit A (258 aa).

Belongs to the LamB/PxpA family. In terms of assembly, forms a complex composed of PxpA, PxpB and PxpC.

The enzyme catalyses 5-oxo-L-proline + ATP + 2 H2O = L-glutamate + ADP + phosphate + H(+). Catalyzes the cleavage of 5-oxoproline to form L-glutamate coupled to the hydrolysis of ATP to ADP and inorganic phosphate. This chain is 5-oxoprolinase subunit A, found in Deinococcus radiodurans (strain ATCC 13939 / DSM 20539 / JCM 16871 / CCUG 27074 / LMG 4051 / NBRC 15346 / NCIMB 9279 / VKM B-1422 / R1).